The chain runs to 54 residues: Relaxin (54 aa).

Gln-1 is subject to Pyrrolidone carboxylic acid. 3 cysteine pairs are disulfide-bonded: Cys-10–Cys-41, Cys-22–Cys-54, and Cys-40–Cys-45.

Belongs to the insulin family. As to quaternary structure, heterodimer of a B chain and an A chain linked by two disulfide bonds.

The protein resides in the secreted. In terms of biological role, relaxin is an ovarian hormone that acts with estrogen to produce dilatation of the birth canal in many mammals. The chain is Relaxin from Balaenoptera acutorostrata (Common minke whale).